A 711-amino-acid chain; its full sequence is Zinc finger protein 175 (711 aa).

The span at 1-11 (MPADVNLSQKP) shows a compositional bias: polar residues. The tract at residues 1–21 (MPADVNLSQKPQVLGPEKQDG) is disordered. The region spanning 27 to 98 (VSFEDVTVDF…EAEVSHQRCQ (72 aa)) is the KRAB domain. The C2H2-type 1; atypical zinc-finger motif lies at 279 to 301 (DGCSECGGSFTQKSHLFAQQRIH). The segment at 307 to 329 (HECGKCGKAFMPQLKLSVYLTDH) adopts a C2H2-type 2; atypical zinc-finger fold. Residues 335–357 (CICKECGKVFIQRSELLTHQKTH) form a C2H2-type 3 zinc finger. The short motif at 359–362 (RKKP) is the Nuclear localization signal element. C2H2-type zinc fingers lie at residues 363–385 (YKCHDCGKAFFQMLSLFRHQRTH), 391–413 (YECSECGKGFSQNSTLIIHQKIH), 419–441 (YACSECGKAFTQKSTLSLHQRIH), 447–469 (YVCIECGQAFIQKAHLIVHQRSH), 475–497 (YQCHNCGKSFISKSQLDIHHRIH), 503–525 (YECSDCGKTFTQKSHLNIHQKIH), 531–553 (HVCSECGKAFNQKSILSMHQRIH), 559–581 (YKCSECGKAFTSKSQFKEHQRIH), 587–609 (YVCTECGKAFNGRSNFHKHQITH), 615–637 (FVCYKCGKAFVQKSELITHQRTH), 643–665 (YECLDCGKSFSKKPQLKVHQRIH), and 671–693 (YVCSECGKAFNNRSNFNKHQTTH).

Belongs to the krueppel C2H2-type zinc-finger protein family. As to expression, ubiquitous.

The protein localises to the cytoplasm. It is found in the nucleus. Functionally, down-regulates the expression of several chemokine receptors. Interferes with HIV-1 replication by suppressing Tat-induced viral LTR promoter activity. The polypeptide is Zinc finger protein 175 (ZNF175) (Homo sapiens (Human)).